The sequence spans 264 residues: Thiazole synthase (264 aa).

The active-site Schiff-base intermediate with DXP is K106. 1-deoxy-D-xylulose 5-phosphate contacts are provided by residues G167, 193 to 194 (AG), and 215 to 216 (NT).

This sequence belongs to the ThiG family. In terms of assembly, homotetramer. Forms heterodimers with either ThiH or ThiS.

It is found in the cytoplasm. It catalyses the reaction [ThiS sulfur-carrier protein]-C-terminal-Gly-aminoethanethioate + 2-iminoacetate + 1-deoxy-D-xylulose 5-phosphate = [ThiS sulfur-carrier protein]-C-terminal Gly-Gly + 2-[(2R,5Z)-2-carboxy-4-methylthiazol-5(2H)-ylidene]ethyl phosphate + 2 H2O + H(+). It functions in the pathway cofactor biosynthesis; thiamine diphosphate biosynthesis. Catalyzes the rearrangement of 1-deoxy-D-xylulose 5-phosphate (DXP) to produce the thiazole phosphate moiety of thiamine. Sulfur is provided by the thiocarboxylate moiety of the carrier protein ThiS. In vitro, sulfur can be provided by H(2)S. The sequence is that of Thiazole synthase from Xanthomonas euvesicatoria pv. vesicatoria (strain 85-10) (Xanthomonas campestris pv. vesicatoria).